Here is a 103-residue protein sequence, read N- to C-terminus: UPF0235 protein Rleg2_3707 (103 aa).

Belongs to the UPF0235 family.

The sequence is that of UPF0235 protein Rleg2_3707 from Rhizobium leguminosarum bv. trifolii (strain WSM2304).